We begin with the raw amino-acid sequence, 427 residues long: Gamma-glutamyl phosphate reductase (427 aa).

The protein belongs to the gamma-glutamyl phosphate reductase family.

It is found in the cytoplasm. The catalysed reaction is L-glutamate 5-semialdehyde + phosphate + NADP(+) = L-glutamyl 5-phosphate + NADPH + H(+). It functions in the pathway amino-acid biosynthesis; L-proline biosynthesis; L-glutamate 5-semialdehyde from L-glutamate: step 2/2. In terms of biological role, catalyzes the NADPH-dependent reduction of L-glutamate 5-phosphate into L-glutamate 5-semialdehyde and phosphate. The product spontaneously undergoes cyclization to form 1-pyrroline-5-carboxylate. The polypeptide is Gamma-glutamyl phosphate reductase (Rhodospirillum rubrum (strain ATCC 11170 / ATH 1.1.1 / DSM 467 / LMG 4362 / NCIMB 8255 / S1)).